The following is a 341-amino-acid chain: Ribosomal RNA small subunit methyltransferase C (341 aa).

It belongs to the methyltransferase superfamily. RsmC family. As to quaternary structure, monomer.

Its subcellular location is the cytoplasm. It catalyses the reaction guanosine(1207) in 16S rRNA + S-adenosyl-L-methionine = N(2)-methylguanosine(1207) in 16S rRNA + S-adenosyl-L-homocysteine + H(+). Specifically methylates the guanine in position 1207 of 16S rRNA in the 30S particle. The chain is Ribosomal RNA small subunit methyltransferase C from Vibrio parahaemolyticus serotype O3:K6 (strain RIMD 2210633).